A 143-amino-acid polypeptide reads, in one-letter code: Nucleoside diphosphate kinase (143 aa).

ATP contacts are provided by Lys-11, Phe-59, Arg-87, Thr-93, Arg-104, and Asn-114. His-117 (pros-phosphohistidine intermediate) is an active-site residue.

This sequence belongs to the NDK family. As to quaternary structure, homotetramer. The cofactor is Mg(2+).

It is found in the cytoplasm. The catalysed reaction is a 2'-deoxyribonucleoside 5'-diphosphate + ATP = a 2'-deoxyribonucleoside 5'-triphosphate + ADP. It carries out the reaction a ribonucleoside 5'-diphosphate + ATP = a ribonucleoside 5'-triphosphate + ADP. Major role in the synthesis of nucleoside triphosphates other than ATP. The ATP gamma phosphate is transferred to the NDP beta phosphate via a ping-pong mechanism, using a phosphorylated active-site intermediate. The chain is Nucleoside diphosphate kinase from Klebsiella pneumoniae (strain 342).